The primary structure comprises 449 residues: Putative methylthiotransferase MJ0865 (449 aa).

A Radical SAM core domain is found at 163–390; that stretch reads SIRGANVYIE…EGEYRKLGLS (228 aa). [4Fe-4S] cluster-binding residues include Cys177, Cys181, and Cys184.

The protein belongs to the methylthiotransferase family. It depends on [4Fe-4S] cluster as a cofactor.

The chain is Putative methylthiotransferase MJ0865 from Methanocaldococcus jannaschii (strain ATCC 43067 / DSM 2661 / JAL-1 / JCM 10045 / NBRC 100440) (Methanococcus jannaschii).